We begin with the raw amino-acid sequence, 664 residues long: Chaperone protein DnaK (664 aa).

Threonine 201 is modified (phosphothreonine; by autocatalysis). Disordered regions lie at residues 516–538 and 578–664; these read DAEKHKEEDKKRREASDARNEAD and APVE…KPND. Residues 578–592 are compositionally biased toward basic and acidic residues; the sequence is APVEKIKDASEELSR. Composition is skewed to low complexity over residues 600 to 617 and 638 to 649; these read AMQSQSASAAASSAANAQ and AGNSASSNSNNE.

Belongs to the heat shock protein 70 family.

Functionally, acts as a chaperone. The chain is Chaperone protein DnaK from Chlamydia caviae (strain ATCC VR-813 / DSM 19441 / 03DC25 / GPIC) (Chlamydophila caviae).